The chain runs to 209 residues: MFSASIERAQNEAPFPIRQGVFVAVAGPSGGGKDSVMAYARERLGNLAGEIVFARRIITRPFAPGGEEHDTRDVPTFEREEAAGAFALSWRANGLCYALPAALDEEMRSGGVVVANVSRAIIPALGERYAHIFPVIVTAPRGVLAERLSRRGRETRDEVLSRLARSEAGELDVPGALVIDNSGPLEQAGERFLEALRKAAAWSDVCDMV.

27–34 (GPSGGGKD) serves as a coordination point for ATP.

This sequence belongs to the ribose 1,5-bisphosphokinase family.

It carries out the reaction alpha-D-ribose 1,5-bisphosphate + ATP = 5-phospho-alpha-D-ribose 1-diphosphate + ADP. Its pathway is metabolic intermediate biosynthesis; 5-phospho-alpha-D-ribose 1-diphosphate biosynthesis; 5-phospho-alpha-D-ribose 1-diphosphate from D-ribose 5-phosphate (route II): step 3/3. Its function is as follows. Catalyzes the phosphorylation of ribose 1,5-bisphosphate to 5-phospho-D-ribosyl alpha-1-diphosphate (PRPP). The chain is Ribose 1,5-bisphosphate phosphokinase PhnN from Chelativorans sp. (strain BNC1).